Reading from the N-terminus, the 387-residue chain is Dynactin subunit 2 (387 aa).

3 coiled-coil regions span residues 99–125 (LQRC…DTGR), 256–282 (SQLD…SNAT), and 355–387 (TGVQ…QMIK).

This sequence belongs to the dynactin subunit 2 family. Subunit of dynactin, a multiprotein complex associated with dynein.

Its subcellular location is the cytoplasm. The protein localises to the cytoskeleton. It is found in the membrane. Modulates cytoplasmic dynein binding to an organelle, and plays a role in prometaphase chromosome alignment and spindle organization during mitosis. This is Dynactin subunit 2 from Anopheles gambiae (African malaria mosquito).